A 694-amino-acid chain; its full sequence is MANKREYPLEKTRNIGIMAHIDAGKTTATERILYYTGKIHKIGETHDGASQMDWMEEEKERGITITSAATTAVWKDTRINIIDTPGHVDFTVEVERALRVLDGAVTVLDAQAGVEPQTETVWRQADDFNVPRLVFANKMDKMGANFDYSVKTIKERLNVTPLPIQMPIGAEDEFAGVIDLVKMVAYIYDEDKLGENWDTVEIPADMKDEAESRHDAMIETLADVNDDIMEKYLEGAEISVDEIKAAIRQATLDQELFPVMAGSAYKDKGIQMMLDAVLDYLPSPVDVKPFVAHDEEGNAIELTAGDDKPFAALAFKIATDPFVGRLTFLRVYTGSLKSGSYVLNATKGKRERIGRLLQMHSNQQNEISEVFSGDIAAAIGLKNTTTGDSLTDPDHPLQLESMDFPEPVIQVSVEPKSKADQDKMDKGLQKLAEEDPTFKAETNPETGETLIAGMGELHLDIIVERLRREFNAEVTVGKPQVSYREAFTKQVSAQGKFVRQSGGKGQYGDVWIEFTPLEEGAGFEFEDAIVGGVVPREYIPAVEQGLKEAMENGVLAGYPLVDLHAKLYDGSYHEVDSSEAAFKVAASLALRNAAPKGGAVILEPIMKVDIVAPEDNLGDVMGHVTARRGSIDGMEERGNAQLVHSFVPLSEMFGYATTLRSATQGRGTFTMTFDHYSAVPKSIQEEIIEKNGGK.

The tr-type G domain occupies 10–285 (EKTRNIGIMA…AVLDYLPSPV (276 aa)). Residues 19-26 (AHIDAGKT), 83-87 (DTPGH), and 137-140 (NKMD) contribute to the GTP site.

Belongs to the TRAFAC class translation factor GTPase superfamily. Classic translation factor GTPase family. EF-G/EF-2 subfamily.

It localises to the cytoplasm. Catalyzes the GTP-dependent ribosomal translocation step during translation elongation. During this step, the ribosome changes from the pre-translocational (PRE) to the post-translocational (POST) state as the newly formed A-site-bound peptidyl-tRNA and P-site-bound deacylated tRNA move to the P and E sites, respectively. Catalyzes the coordinated movement of the two tRNA molecules, the mRNA and conformational changes in the ribosome. The chain is Elongation factor G from Limosilactobacillus fermentum (strain NBRC 3956 / LMG 18251) (Lactobacillus fermentum).